Reading from the N-terminus, the 341-residue chain is 4-hydroxy-2-oxovalerate aldolase (341 aa).

Residues 9 to 259 (VRITEVCLRD…KLDIDLYKMM (251 aa)) form the Pyruvate carboxyltransferase domain. 17–18 (RD) serves as a coordination point for substrate. Residue Asp-18 coordinates Mn(2+). His-21 functions as the Proton acceptor in the catalytic mechanism. Positions 171 and 198 each coordinate substrate. Mn(2+) is bound by residues His-198 and His-200. Substrate is bound at residue Tyr-289.

The protein belongs to the 4-hydroxy-2-oxovalerate aldolase family.

The enzyme catalyses (S)-4-hydroxy-2-oxopentanoate = acetaldehyde + pyruvate. The chain is 4-hydroxy-2-oxovalerate aldolase (dmpG) from Bacillus cereus (strain 03BB102).